Here is a 271-residue protein sequence, read N- to C-terminus: Thiazole synthase (271 aa).

Lys-95 serves as the catalytic Schiff-base intermediate with DXP. 1-deoxy-D-xylulose 5-phosphate is bound by residues Gly-156, 182-183 (AG), and 204-205 (NT).

It belongs to the ThiG family. Homotetramer. Forms heterodimers with either ThiH or ThiS.

The protein localises to the cytoplasm. The catalysed reaction is [ThiS sulfur-carrier protein]-C-terminal-Gly-aminoethanethioate + 2-iminoacetate + 1-deoxy-D-xylulose 5-phosphate = [ThiS sulfur-carrier protein]-C-terminal Gly-Gly + 2-[(2R,5Z)-2-carboxy-4-methylthiazol-5(2H)-ylidene]ethyl phosphate + 2 H2O + H(+). It participates in cofactor biosynthesis; thiamine diphosphate biosynthesis. Functionally, catalyzes the rearrangement of 1-deoxy-D-xylulose 5-phosphate (DXP) to produce the thiazole phosphate moiety of thiamine. Sulfur is provided by the thiocarboxylate moiety of the carrier protein ThiS. In vitro, sulfur can be provided by H(2)S. The sequence is that of Thiazole synthase from Yersinia pestis.